Reading from the N-terminus, the 449-residue chain is Glucose-6-phosphate isomerase (449 aa).

Catalysis depends on Glu291, which acts as the Proton donor. Catalysis depends on residues His312 and Lys426.

Belongs to the GPI family.

Its subcellular location is the cytoplasm. It carries out the reaction alpha-D-glucose 6-phosphate = beta-D-fructose 6-phosphate. Its pathway is carbohydrate biosynthesis; gluconeogenesis. It functions in the pathway carbohydrate degradation; glycolysis; D-glyceraldehyde 3-phosphate and glycerone phosphate from D-glucose: step 2/4. Catalyzes the reversible isomerization of glucose-6-phosphate to fructose-6-phosphate. The sequence is that of Glucose-6-phosphate isomerase from Streptococcus pyogenes serotype M4 (strain MGAS10750).